A 398-amino-acid chain; its full sequence is Putative tyrosine-protein phosphatase C15H7.3 (398 aa).

Basic residues predominate over residues 1–15 (MERSQKSARKKKKTS). Positions 1-114 (MERSQKSARK…EPWSEEEPAK (114 aa)) are disordered. A compositionally biased stretch (basic and acidic residues) spans 18-40 (GNDRSIRSERKSKQKKPAGEKSQ). Residues 41–50 (KSRRTRKSRG) are compositionally biased toward basic residues. Residues 55–73 (GFTSRETIQPSSSGQSEGT) show a composition bias toward polar residues. The span at 74 to 114 (TRMDDQKDEKKDDKKEEKKEERKEEKKEEVKEPWSEEEPAK) shows a compositional bias: basic and acidic residues. The Tyrosine-protein phosphatase domain maps to 125–376 (TNVGGTFKQT…GTVHRSMACW (252 aa)).

It belongs to the protein-tyrosine phosphatase family. Non-receptor class subfamily.

It carries out the reaction O-phospho-L-tyrosyl-[protein] + H2O = L-tyrosyl-[protein] + phosphate. The protein is Putative tyrosine-protein phosphatase C15H7.3 of Caenorhabditis elegans.